Reading from the N-terminus, the 302-residue chain is Elongation factor Ts (302 aa).

The involved in Mg(2+) ion dislocation from EF-Tu stretch occupies residues 80–83 (TDFV).

The protein belongs to the EF-Ts family.

It localises to the cytoplasm. Functionally, associates with the EF-Tu.GDP complex and induces the exchange of GDP to GTP. It remains bound to the aminoacyl-tRNA.EF-Tu.GTP complex up to the GTP hydrolysis stage on the ribosome. The chain is Elongation factor Ts from Gluconobacter oxydans (strain 621H) (Gluconobacter suboxydans).